Here is a 436-residue protein sequence, read N- to C-terminus: Peptidase B (436 aa).

K201 and D206 together coordinate Mn(2+). K213 is an active-site residue. The Mn(2+) site is built by D224, D283, and E285. Residue R287 is part of the active site.

This sequence belongs to the peptidase M17 family. In terms of assembly, homohexamer. It depends on Mn(2+) as a cofactor.

Its subcellular location is the cytoplasm. The enzyme catalyses Release of an N-terminal amino acid, Xaa, from a peptide or arylamide. Xaa is preferably Glu or Asp but may be other amino acids, including Leu, Met, His, Cys and Gln.. Probably plays an important role in intracellular peptide degradation. This Pectobacterium atrosepticum (strain SCRI 1043 / ATCC BAA-672) (Erwinia carotovora subsp. atroseptica) protein is Peptidase B.